The chain runs to 870 residues: Radial spoke head 10 homolog B2 (870 aa).

Positions 1–16 (MVKEKKKADKKGEKSA) are enriched in basic and acidic residues. Positions 1–44 (MVKEKKKADKKGEKSARSPSSLSDNLDFSKQDGNTTRQEMSPAG) are disordered. Positions 17 to 39 (RSPSSLSDNLDFSKQDGNTTRQE) are enriched in polar residues. MORN repeat units lie at residues 86-108 (YEGEKVRGLYEGEGFAAFQGGCT), 109-131 (YRGMFSEGLMHGQGTYIWADGLK), 132-154 (YEGDFVKNVPMNHGVYTWPDGSM), 155-177 (YEGEVVNGMRNGFGMFKCSTQPV), 179-201 (YIGHWCNGKRHGKGSIYYNQEGT), 204-226 (YEGDWVQNIKKGWGIRCYKSGNI), 227-249 (YEGQWEDNMRHGEGRMRWLTTNE), 251-273 (YTGRWERGIQNGFGTHTWFLKRI), 284-306 (YIGEFVNGYRHGRGKFYYASGAM), and 307-329 (YDGEWVSNKKHGMGRLTFKNGRV). Positions 674 to 704 (NKSPSAVMSHESDAAHSDSARSSSSKLELSP) are disordered. A compositionally biased stretch (basic and acidic residues) spans 683–692 (HESDAAHSDS). Residues 693–703 (ARSSSSKLELS) show a composition bias toward low complexity. Residues 784–811 (KEKIRADRLRSTAQAQQRKMEDDELEAR) adopt a coiled-coil conformation. Positions 840–870 (VSSSHLILDPPKEDVTVSPSSKTITSKKKKK) are disordered.

As to quaternary structure, interacts with RSPH6A. Does not appear to be part of the axonemal radial spoke complexes 1 or 2.

It is found in the cytoplasm. The protein resides in the cytoskeleton. Its subcellular location is the cilium axoneme. It localises to the cell projection. The protein localises to the cilium. It is found in the flagellum. May function as part of the axonemal radial spoke complex 3 (RS3). Radial spoke complexes are important for ciliary motility. In Homo sapiens (Human), this protein is Radial spoke head 10 homolog B2 (RSPH10B2).